The chain runs to 239 residues: Protein TIPIN homolog (239 aa).

Composition is skewed to acidic residues over residues 1 to 14 (MDEM…DELD) and 156 to 166 (DGADDDEDDLF). Disordered stretches follow at residues 1–38 (MDEM…RRII) and 135–239 (ESTD…NNDW). Basic and acidic residues-rich tracts occupy residues 169–193 (LPEK…EKKN) and 206–223 (YRMM…AREA). Residues 224 to 239 (EAEDELMEDFDLNNDW) show a composition bias toward acidic residues.

Belongs to the CSM3 family.

It localises to the cytoplasm. It is found in the nucleus. Required for normal progression of S-phase. Important for cell survival after DNA damage or replication stress. The polypeptide is Protein TIPIN homolog (Caenorhabditis briggsae).